The following is a 229-amino-acid chain: NAD(P)H-hydrate epimerase (229 aa).

The region spanning 11–222 (YAAADIRAAE…DVGLDLSGAT (212 aa)) is the YjeF N-terminal domain. 59–63 (NNGGD) serves as a coordination point for (6S)-NADPHX. Residues N60 and D124 each contribute to the K(+) site. (6S)-NADPHX contacts are provided by residues 128 to 136 (GIGTTASPA) and D164. Position 167 (S167) interacts with K(+).

Belongs to the NnrE/AIBP family. The cofactor is K(+).

It catalyses the reaction (6R)-NADHX = (6S)-NADHX. The catalysed reaction is (6R)-NADPHX = (6S)-NADPHX. Functionally, catalyzes the epimerization of the S- and R-forms of NAD(P)HX, a damaged form of NAD(P)H that is a result of enzymatic or heat-dependent hydration. This is a prerequisite for the S-specific NAD(P)H-hydrate dehydratase to allow the repair of both epimers of NAD(P)HX. The polypeptide is NAD(P)H-hydrate epimerase (Clavibacter sepedonicus (Clavibacter michiganensis subsp. sepedonicus)).